Consider the following 3174-residue polypeptide: Probable polyketide synthase 15 (3174 aa).

The region spanning 23–474 (NDEIAIVGIG…GSNCCLILSQ (452 aa)) is the Ketosynthase family 3 (KS3) domain. Active-site for beta-ketoacyl synthase activity residues include cysteine 194, histidine 342, and histidine 397. 2 coiled-coil regions span residues 472-509 (LSQF…QYDN) and 574-604 (EFNK…RVQT). Basic and acidic residues predominate over residues 578–599 (QKQSQKEKEKEKEREGEEKEQL). Residues 578-601 (QKQSQKEKEKEKEREGEEKEQLNR) are disordered. Residues 707 to 740 (GIEASFIVGHSLGEIPAAYCSGMITLDTLCYLIY) form an acyl/malonyl transferase region. The For acyl/malonyl transferase activity role is filled by serine 717. An N-terminal hotdog fold region spans residues 1034–1156 (IDILGLSNYD…ANFQLLNNNN (123 aa)). Residues 1034-1332 (IDILGLSNYD…CKSLKIVKNP (299 aa)) form the PKS/mFAS DH domain. Histidine 1068 (proton acceptor; for dehydratase activity) is an active-site residue. The C-terminal hotdog fold stretch occupies residues 1182–1332 (NKTKISRIDL…CKSLKIVKNP (151 aa)). Catalysis depends on aspartate 1241, which acts as the Proton donor; for dehydratase activity. Positions 1758–1793 (LEININNNNNNNNNNNNNNNNNNNNNNNNNNYEDNV) form a coiled coil. Positions 2653–2730 (VDSLNIKDIF…LVIKIIITAI (78 aa)) constitute a Carrier domain. Serine 2690 carries the O-(pantetheine 4'-phosphoryl)serine modification.

It depends on pantetheine 4'-phosphate as a cofactor.

Its function is as follows. Probable polyketide synthase. The protein is Probable polyketide synthase 15 (pks15) of Dictyostelium discoideum (Social amoeba).